The primary structure comprises 131 residues: Small ribosomal subunit protein uS11 (131 aa).

It belongs to the universal ribosomal protein uS11 family. Part of the 30S ribosomal subunit. Interacts with proteins S7 and S18. Binds to IF-3.

In terms of biological role, located on the platform of the 30S subunit, it bridges several disparate RNA helices of the 16S rRNA. Forms part of the Shine-Dalgarno cleft in the 70S ribosome. This Wigglesworthia glossinidia brevipalpis protein is Small ribosomal subunit protein uS11.